Consider the following 322-residue polypeptide: Tlg2p-like protein a (322 aa).

Residues 1-301 are Cytoplasmic-facing; sequence MATRNRTLLF…QRHGGMVKCA (301 aa). Positions 116-146 form a coiled coil; sequence KEDQHNIESLTQEITFLLKKSEKQLQRLSAS. The t-SNARE coiled-coil homology domain maps to 226–288; that stretch reads EEVSVEREKE…EDGLKQLQKA (63 aa). The helical; Anchor for type IV membrane protein transmembrane segment at 302 to 322 threads the bilayer; it reads SVLVILCFIMLLLLILKEIFL.

Belongs to the syntaxin family. As to quaternary structure, interacts with VTI12 and SYP61 to form a t-SNARE complex and with VPS45. Interacts with TNO1. Binds to YKT61 and YKT62. Core constituent of the SNARE complex required for membrane fusion at the trans-Golgi network. As to expression, mostly expressed in flowers, to a lower extent in leaves and roots, and, at low levels, in stems.

It is found in the golgi apparatus. The protein resides in the trans-Golgi network membrane. In terms of biological role, contributes to the regulation of secretory and vacuolar transport pathways in the post-Golgi network, and to the maintenance of the Golgi apparatus and trans-Golgi network (TGN) morphologies. Together with VTI12, required for membrane fusion. Vesicle trafficking protein that functions in the secretory pathway and mediates liposome fusion; the fusion of phospholipid vesicles containing SYP41 and VTI12 is triggered by YKT61 and YKT62. Required for extracellular resistance responses to a fungal pathogen. Also involved in the protection of chloroplasts from salicylic acid-dependent biotic stress. This Arabidopsis thaliana (Mouse-ear cress) protein is Tlg2p-like protein a.